The sequence spans 435 residues: Chromatin structure-remodeling complex subunit RSC7 (435 aa).

The interval 1-97 (MSDSEGGLAS…DKGVTRSRNR (97 aa)) is disordered. Over residues 30 to 66 (DTEDLDIDENDENEDDDYREEEANEGVNEEEISDEEE) the composition is skewed to acidic residues. Ser-86 is subject to Phosphoserine. The tract at residues 248–435 (ELRTKGNVIE…QNFEKCNEYI (188 aa)) is functional region; able to complement all NPL6 null allele phenotypes.

The protein belongs to the RSC7/SWP82 family. RSC7 subfamily. Interacts with ARP7, ARP9, RSC3, RSC8, RSC30 and STH1. Component of the two forms of the RSC complex composed of at least either RSC1 or RSC2, and ARP7, ARP9, LDB7, NPL6, RSC3, RSC30, RSC4, RSC58, RSC6, RSC8, RSC9, SFH1, STH1, HTL1 and probably RTT102. The complexes interact with histone and histone variant components of centromeric chromatin. Component of a fungal-specific module (HTL1-LDB7-NPL6-RSC3-RSC30) within the RSC complex.

It is found in the nucleus. Functionally, component of the chromatin structure remodeling complex (RSC), which is involved in transcription regulation and nucleosome positioning. RSC is responsible for the transfer of a histone octamer from a nucleosome core particle to naked DNA. The reaction requires ATP and involves an activated RSC-nucleosome intermediate. Remodeling reaction also involves DNA translocation, DNA twist and conformational change. As a reconfigurer of centromeric and flanking nucleosomes, RSC complex is required both for proper kinetochore function in chromosome segregation and, via a PKC1-dependent signaling pathway, for organization of the cellular cytoskeleton. Together with HTL1, LDB7, RSC3, RSC30 components, defines a fungal-specific module within the RSC complex that plays a role in many cellular functions including the maintenance of cell wall integrity. Acidic protein important for nuclear protein localization. The protein is Chromatin structure-remodeling complex subunit RSC7 (NPL6) of Saccharomyces cerevisiae (strain ATCC 204508 / S288c) (Baker's yeast).